We begin with the raw amino-acid sequence, 1081 residues long: FHF complex subunit HOOK-interacting protein 1A (1081 aa).

4 disordered regions span residues 474–496, 544–623, 658–770, and 863–883; these read SEEQLLPETPCSPSSPSPPPPPA, PETF…DPPK, EKDT…ENEP, and EAGSSPFGVGEDTAFSSRHPV. Residues 486 to 496 are compositionally biased toward pro residues; the sequence is PSSPSPPPPPA. Residues 553–564 are compositionally biased toward basic and acidic residues; the sequence is EESRENSGHPEA. Residues 567–576 are compositionally biased toward polar residues; sequence PQQSVRTSGQ. Residues 680–707 are compositionally biased toward acidic residues; the sequence is EPLEDTSEQQEDTSEQLEDTSELQEDTA. 2 stretches are compositionally biased toward polar residues: residues 727-738 and 746-762; these read EAQSLPTSNGPL and ESQPSRESSDLCQNTFS.

Belongs to the FHIP family. In terms of assembly, may be a component of the FTS/Hook/FHIP complex (FHF complex), composed of AKTIP/FTS, FHIP1B, and one or more members of the Hook family of proteins HOOK1, HOOK2, and HOOK3. May interact directly with AKTIP/FTS.

Probable component of the FTS/Hook/FHIP complex (FHF complex). FHF complex promotes the distribution of AP-4 complex to the perinuclear area of the cell. This chain is FHF complex subunit HOOK-interacting protein 1A, found in Mus musculus (Mouse).